A 257-amino-acid polypeptide reads, in one-letter code: 5'-nucleotidase SurE (257 aa).

A divalent metal cation contacts are provided by aspartate 15, aspartate 16, serine 46, and asparagine 99.

It belongs to the SurE nucleotidase family. The cofactor is a divalent metal cation.

The protein localises to the cytoplasm. The enzyme catalyses a ribonucleoside 5'-phosphate + H2O = a ribonucleoside + phosphate. Its function is as follows. Nucleotidase that shows phosphatase activity on nucleoside 5'-monophosphates. In Aliivibrio fischeri (strain ATCC 700601 / ES114) (Vibrio fischeri), this protein is 5'-nucleotidase SurE.